The chain runs to 196 residues: Glycerol-3-phosphate acyltransferase (196 aa).

The next 5 helical transmembrane spans lie at 4-24 (FYIM…VVLT), 53-73 (LGVL…LIAI), 78-98 (LGDA…CYPV), 114-134 (IFLV…ALLV), and 140-160 (VSLG…FTEG).

This sequence belongs to the PlsY family. As to quaternary structure, probably interacts with PlsX.

Its subcellular location is the cell inner membrane. It catalyses the reaction an acyl phosphate + sn-glycerol 3-phosphate = a 1-acyl-sn-glycero-3-phosphate + phosphate. The protein operates within lipid metabolism; phospholipid metabolism. In terms of biological role, catalyzes the transfer of an acyl group from acyl-phosphate (acyl-PO(4)) to glycerol-3-phosphate (G3P) to form lysophosphatidic acid (LPA). This enzyme utilizes acyl-phosphate as fatty acyl donor, but not acyl-CoA or acyl-ACP. The sequence is that of Glycerol-3-phosphate acyltransferase from Syntrophotalea carbinolica (strain DSM 2380 / NBRC 103641 / GraBd1) (Pelobacter carbinolicus).